Reading from the N-terminus, the 105-residue chain is Probable tetrachloroethene reductive dehalogenase membrane anchor protein (105 aa).

The next 3 membrane-spanning stretches (helical) occupy residues 3–23 (IYDV…QYGI), 35–55 (IPLQ…LAWG), and 66–86 (AIGM…IITY).

It belongs to the PceB family.

The protein resides in the cell membrane. In terms of biological role, may act as a membrane anchor for the tetrachloroethene reductive dehalogenase PceA. The polypeptide is Probable tetrachloroethene reductive dehalogenase membrane anchor protein (Desulfitobacterium hafniense (Desulfitobacterium frappieri)).